The chain runs to 344 residues: Nuclear distribution protein nudE homolog 1 (344 aa).

Residues 1–93 form a self-association region; that stretch reads MEDSGKTFES…MQHSEGYRQI (93 aa). A coiled-coil region spans residues 18-188; it reads WRDLAMTYKQ…ELAVQQKQDK (171 aa). The interaction with PAFAH1B1 stretch occupies residues 88–156; that stretch reads EGYRQISALE…ERNAFLESEL (69 aa). Positions 167–290 are interaction with CENPF; sequence QRLKDEARDL…QSPSRTSGPA (124 aa). Residues 181 to 246 are disordered; sequence AVQQKQDKPR…DSSTSGTPLT (66 aa). The residue at position 211 (S211) is a Phosphoserine. Residues T215 and T228 each carry the phosphothreonine modification. Phosphoserine is present on S239. T243 and T246 each carry phosphothreonine. C274 carries S-palmitoyl cysteine; by ZDHHC2, ZDHHC3 and ZDHHC7 lipidation. Residues 279 to 289 show a composition bias toward polar residues; sequence YDQSPSRTSGP. Positions 279 to 337 are disordered; that stretch reads YDQSPSRTSGPASGRGTKNRDGVDRRPGSTSVGDKGSGKRLEFGKPASEPASPALPSAQ. Phosphoserine is present on S282. A compositionally biased stretch (basic and acidic residues) spans 296–305; that stretch reads KNRDGVDRRP. The residue at position 309 (S309) is a Phosphoserine. A compositionally biased stretch (low complexity) spans 324–336; it reads PASEPASPALPSA.

The protein belongs to the nudE family. Homodimer. Interacts with dynactin and PCM1. Interacts with CENPF, LIS1, CNTRL, dynein, tubulin gamma, PAFAH1B1, PCNT, SLMAP and TCP1. Interacts with ZNF365. Interacts with RAB9A; the interaction leads to RAB9A-dynein motor tethering. Interacts (via C-terminus) with MCRS1 (via C-terminus); phosphorylation of NDE1 inhibits the interaction. Phosphorylated in mitosis. Phosphorylation at Thr-246 is essential for the G2/M transition. As to expression, highly expressed in ovary. Also expressed in brain, heart, kidney, large intestine, liver, lung, small intestine and testis.

The protein localises to the cytoplasm. The protein resides in the cytoskeleton. It is found in the microtubule organizing center. It localises to the centrosome. Its subcellular location is the spindle. The protein localises to the chromosome. The protein resides in the centromere. It is found in the kinetochore. It localises to the cleavage furrow. Its subcellular location is the cytoplasmic vesicle membrane. Its function is as follows. Required for centrosome duplication and formation and function of the mitotic spindle. Essential for the development of the cerebral cortex. May regulate the production of neurons by controlling the orientation of the mitotic spindle during division of cortical neuronal progenitors of the proliferative ventricular zone of the brain. Orientation of the division plane perpendicular to the layers of the cortex gives rise to two proliferative neuronal progenitors whereas parallel orientation of the division plane yields one proliferative neuronal progenitor and a postmitotic neuron. A premature shift towards a neuronal fate within the progenitor population may result in an overall reduction in the final number of neurons and an increase in the number of neurons in the deeper layers of the cortex. Acts as a RAB9A/B effector that tethers RAB9-associated late endosomes to the dynein motor for their retrograde transport to the trans-Golgi network. The sequence is that of Nuclear distribution protein nudE homolog 1 from Mus musculus (Mouse).